Here is a 166-residue protein sequence, read N- to C-terminus: Lipoprotein signal peptidase (166 aa).

Transmembrane regions (helical) follow at residues 12–32 (WLWVVVAVLIIDLGSKFLILQ), 70–90 (WFFSGIAIGICVVLTVLMYRS), and 102–122 (ALIIGGALGNLFDRLWHGFVV). Active-site residues include Asp-123 and Asp-141. Residues 137-157 (FNLADSAICIGAALIVLEGFL) form a helical membrane-spanning segment.

It belongs to the peptidase A8 family.

The protein localises to the cell inner membrane. It catalyses the reaction Release of signal peptides from bacterial membrane prolipoproteins. Hydrolyzes -Xaa-Yaa-Zaa-|-(S,diacylglyceryl)Cys-, in which Xaa is hydrophobic (preferably Leu), and Yaa (Ala or Ser) and Zaa (Gly or Ala) have small, neutral side chains.. The protein operates within protein modification; lipoprotein biosynthesis (signal peptide cleavage). In terms of biological role, this protein specifically catalyzes the removal of signal peptides from prolipoproteins. The polypeptide is Lipoprotein signal peptidase (Klebsiella pneumoniae subsp. pneumoniae (strain ATCC 700721 / MGH 78578)).